Here is a 231-residue protein sequence, read N- to C-terminus: Large ribosomal subunit protein uL1 (231 aa).

This sequence belongs to the universal ribosomal protein uL1 family. Part of the 50S ribosomal subunit.

Binds directly to 23S rRNA. The L1 stalk is quite mobile in the ribosome, and is involved in E site tRNA release. In terms of biological role, protein L1 is also a translational repressor protein, it controls the translation of the L11 operon by binding to its mRNA. This chain is Large ribosomal subunit protein uL1, found in Staphylococcus haemolyticus (strain JCSC1435).